The following is a 491-amino-acid chain: MSLLMITENVKLAREYALLGNYDSAMVYYQGVLDQINKYLYSVKDTHLHQKWQQVWQEINVEAKHVKEIMKTLESFKLDSTSLKAAQHELPSSEGEVWSLPVPVERRPLPGPRKRQSTQHSDPKPHSNRPGAVVRAHRPSAQSLHSDRGKAVRSREKKEQSKGREEKNKLPAAVTEPEANKFDSTGYDKDLVEALERDIISQNPNVRWYDIADLVEAKKLLQEAVVLPMWMPEFFKGIRRPWKGVLMVGPPGTGKTLLAKAVATECKTTFFNVSSSTLTSKYRGESEKLVRLLFEMARFYSPATIFIDEIDSICSRRGTSEEHEASRRVKAELLVQMDGVGGASENDDPSKMVMVLAATNFPWDIDEALRRRLEKRIYIPLPSAKGREELLRISLRELELADDVNLASIAENMEGYSGADITNVCRDASLMAMRRRIEGLTPEEIRNLSREEMHMPTTMEDFEMALKKVSKSVSAADIERYEKWIVEFGSC.

The segment at 1 to 29 (MSLLMITENVKLAREYALLGNYDSAMVYY) is interaction with KATNB1. The tract at residues 1 to 75 (MSLLMITENV…VKEIMKTLES (75 aa)) is interaction with dynein and NDEL1. The interaction with microtubules stretch occupies residues 1–185 (MSLLMITENV…EPEANKFDST (185 aa)). Position 42 is a phosphoserine; by DYRK2 (S42). A disordered region spans residues 87-183 (QHELPSSEGE…VTEPEANKFD (97 aa)). Residues 145–169 (HSDRGKAVRSREKKEQSKGREEKNK) are compositionally biased toward basic and acidic residues. 249-256 (GPPGTGKT) lines the ATP pocket.

It belongs to the AAA ATPase family. Katanin p60 subunit A1 subfamily. In terms of assembly, can homooligomerize into hexameric rings, which may be promoted by interaction with microtubules. Interacts with KATNB1, which may serve as a targeting subunit. Interacts with ASPM; the katanin complex formation KATNA1:KATNB1 is required for the association of ASPM. Interacts with dynein and NDEL1. Associates with the E3 ligase complex containing DYRK2, EDD/UBR5, DDB1 and DCAF1 proteins (EDVP complex). Interacts with KLHL42 (via the kelch domains). Interacts with CUL3; the interaction is enhanced by KLHL42. Interacts with KATNB1 and KATNBL1. In terms of processing, phosphorylation by DYRK2 triggers ubiquitination and subsequent degradation. Ubiquitinated by the BCR(KLHL42) E3 ubiquitin ligase complex, leading to its proteasomal degradation. Ubiquitinated by the EDVP E3 ligase complex and subsequently targeted for proteasomal degradation.

Its subcellular location is the cytoplasm. It is found in the midbody. The protein localises to the cytoskeleton. It localises to the microtubule organizing center. The protein resides in the centrosome. Its subcellular location is the spindle pole. It is found in the spindle. It carries out the reaction n ATP + n H2O + a microtubule = n ADP + n phosphate + (n+1) alpha/beta tubulin heterodimers.. With respect to regulation, ATPase activity is stimulated by microtubules, which promote homooligomerization. ATP-dependent microtubule severing is stimulated by interaction with KATNB1. Catalytic subunit of a complex which severs microtubules in an ATP-dependent manner. Microtubule severing may promote rapid reorganization of cellular microtubule arrays and the release of microtubules from the centrosome following nucleation. Microtubule release from the mitotic spindle poles may allow depolymerization of the microtubule end proximal to the spindle pole, leading to poleward microtubule flux and poleward motion of chromosome. Microtubule release within the cell body of neurons may be required for their transport into neuronal processes by microtubule-dependent motor proteins. This transport is required for axonal growth. In Rattus norvegicus (Rat), this protein is Katanin p60 ATPase-containing subunit A1 (Katna1).